A 519-amino-acid chain; its full sequence is MEKTLLHLRDITKIYDDGFAAVNKFDLKIKKGEFVTLLGPSGCGKTTMLKIIAGFEQPTNGKILYNGIDIKDMPIRLRPTSTVFQDYALFPNMTVKQNIKYGLKLMRKPKDNVDQSIYLQADKVYNSASKKANEKIKELKKQRRGLLAEIKKMDLKYQKNKNIFEIKEMRKNQYLGTLDELYQKQGINKNGKPGFLNYFKSWFSHEKLNLNDPIDREIFNLKKAYKEKSGLDKRYDKITYKYNDLDYWESYWATYPQLKKEQFENKNITRLLTKEEVEKEANRVINLVGLSARKDSYPSDLSGGMQQRVALARSLVIQPEIILLDEPLSALDAKVRKQLQDELKKLHKNLGITFILVTHDQEEALSLSDKVVVMSNGQIEQVGKPSDIYDSPNSLWVANFIGKTNIFEGHYIAKGEVEFDGITSKTDVINGFSENEACYIMIRPEDFDVVKKDEGSINARVESVLYKGLMWDIKCKYNDMIISVEGVNKVNEGDEIGLDWDDIDVHVIKKDYLNNEQAI.

Residues 6–401 enclose the ABC transporter domain; that stretch reads LHLRDITKIY…PNSLWVANFI (396 aa). 39 to 46 serves as a coordination point for ATP; sequence GPSGCGKT. Residues 107–270 form an insert region; the sequence is RKPKDNVDQS…EQFENKNITR (164 aa).

Belongs to the ABC transporter superfamily. Spermidine/putrescine importer (TC 3.A.1.11.1) family. As to quaternary structure, the complex is composed of two ATP-binding proteins (PotA), two transmembrane proteins (PotB and PotC) and a solute-binding protein (PotD).

Its subcellular location is the cell membrane. It catalyses the reaction ATP + H2O + polyamine-[polyamine-binding protein]Side 1 = ADP + phosphate + polyamineSide 2 + [polyamine-binding protein]Side 1.. Its function is as follows. Part of the ABC transporter complex PotABCD involved in spermidine/putrescine import. Responsible for energy coupling to the transport system. The sequence is that of Spermidine/putrescine import ATP-binding protein PotA from Ureaplasma parvum serovar 3 (strain ATCC 700970).